We begin with the raw amino-acid sequence, 183 residues long: Threonylcarbamoyl-AMP synthase (183 aa).

The region spanning 1–183 (MNITQIIEKL…LFTNQLVRQG (183 aa)) is the YrdC-like domain.

The protein belongs to the SUA5 family. TsaC subfamily.

The protein localises to the cytoplasm. It carries out the reaction L-threonine + hydrogencarbonate + ATP = L-threonylcarbamoyladenylate + diphosphate + H2O. Required for the formation of a threonylcarbamoyl group on adenosine at position 37 (t(6)A37) in tRNAs that read codons beginning with adenine. Catalyzes the conversion of L-threonine, HCO(3)(-)/CO(2) and ATP to give threonylcarbamoyl-AMP (TC-AMP) as the acyladenylate intermediate, with the release of diphosphate. The polypeptide is Threonylcarbamoyl-AMP synthase (Histophilus somni (strain 2336) (Haemophilus somnus)).